A 102-amino-acid polypeptide reads, in one-letter code: Legumin-like protein Mac i 2 (102 aa).

This sequence belongs to the 11S seed storage protein (globulins) family.

Functionally, seed storage protein. The sequence is that of Legumin-like protein Mac i 2 from Macadamia integrifolia (Macadamia nut).